The primary structure comprises 514 residues: ATP synthase subunit alpha (514 aa).

Position 170–177 (170–177 (GDRQTGKT)) interacts with ATP.

The protein belongs to the ATPase alpha/beta chains family. F-type ATPases have 2 components, CF(1) - the catalytic core - and CF(0) - the membrane proton channel. CF(1) has five subunits: alpha(3), beta(3), gamma(1), delta(1), epsilon(1). CF(0) has three main subunits: a(1), b(2) and c(9-12). The alpha and beta chains form an alternating ring which encloses part of the gamma chain. CF(1) is attached to CF(0) by a central stalk formed by the gamma and epsilon chains, while a peripheral stalk is formed by the delta and b chains.

It is found in the cell inner membrane. The catalysed reaction is ATP + H2O + 4 H(+)(in) = ADP + phosphate + 5 H(+)(out). Produces ATP from ADP in the presence of a proton gradient across the membrane. The alpha chain is a regulatory subunit. The chain is ATP synthase subunit alpha from Acidithiobacillus ferridurans.